Reading from the N-terminus, the 339-residue chain is Photosystem II assembly lipoprotein Ycf48 (339 aa).

The signal sequence occupies residues 1–22 (MVIVKSWQKIFTLLVVLLLCIG). The N-palmitoyl cysteine moiety is linked to residue C23. C23 carries S-diacylglycerol cysteine lipidation.

It belongs to the Ycf48 family. Part of early PSII assembly complexes which includes D1 (psbA) and PsbI; not found in mature PSII. Binds to the lumenal side of PSII complexes. Interacts with YidC.

It is found in the cellular thylakoid membrane. In terms of biological role, a factor required for optimal assembly of photosystem II (PSII), acting in the early stages of PSII assembly. Also plays a role in replacement of photodamaged D1 (psbA). Assists YidC in synthesis of chlorophyll-binding proteins. The sequence is that of Photosystem II assembly lipoprotein Ycf48 from Nostoc sp. (strain PCC 7120 / SAG 25.82 / UTEX 2576).